We begin with the raw amino-acid sequence, 268 residues long: Small ribosomal subunit protein eS1 (268 aa).

The interval 1 to 21 (MAVGKNKGLSKGGKKGGKKKV) is disordered.

This sequence belongs to the eukaryotic ribosomal protein eS1 family. As to quaternary structure, component of the small ribosomal subunit. Mature ribosomes consist of a small (40S) and a large (60S) subunit. The 40S subunit contains about 33 different proteins and 1 molecule of RNA (18S). The 60S subunit contains about 49 different proteins and 3 molecules of RNA (28S, 5.8S and 5S).

It localises to the cytoplasm. In terms of biological role, essential for oogenesis; required for late follicle cell development. The protein is Small ribosomal subunit protein eS1 of Drosophila virilis (Fruit fly).